The primary structure comprises 164 residues: Nucleotide-binding protein Mfla_1706 (164 aa).

Belongs to the YajQ family.

Nucleotide-binding protein. In Methylobacillus flagellatus (strain ATCC 51484 / DSM 6875 / VKM B-1610 / KT), this protein is Nucleotide-binding protein Mfla_1706.